Reading from the N-terminus, the 198-residue chain is Superoxide dismutase [Fe] (198 aa).

Fe cation-binding residues include H27, H74, D158, and H162.

Belongs to the iron/manganese superoxide dismutase family. Homodimer. Fe cation is required as a cofactor.

It localises to the cytoplasm. The catalysed reaction is 2 superoxide + 2 H(+) = H2O2 + O2. Destroys superoxide anion radicals which are normally produced within the cells and which are toxic to biological systems. In Plasmodium malariae, this protein is Superoxide dismutase [Fe] (SODB).